The following is a 142-amino-acid chain: MKTFSAKPHEVKRDWYVIDATDKVLGRVASEVARRLRGKHKPEFTPHVDTGDYIIIVNAAKLRVTGTKETDKKYYRHSGYPGGIYETTFGKMQQRFPGRALEKAVKGMLPKGPLGYAMIKKLKVYAEAEHPHEAQQPKALEI.

This sequence belongs to the universal ribosomal protein uL13 family. As to quaternary structure, part of the 50S ribosomal subunit.

Functionally, this protein is one of the early assembly proteins of the 50S ribosomal subunit, although it is not seen to bind rRNA by itself. It is important during the early stages of 50S assembly. The sequence is that of Large ribosomal subunit protein uL13 from Cupriavidus necator (strain ATCC 17699 / DSM 428 / KCTC 22496 / NCIMB 10442 / H16 / Stanier 337) (Ralstonia eutropha).